The primary structure comprises 456 residues: Bifunctional protein GlmU (456 aa).

Residues 1 to 229 form a pyrophosphorylase region; it reads MSNSAMSVVI…LSEVEGVNNR (229 aa). Residues 11–14, lysine 25, glutamine 76, 81–82, 103–105, glycine 140, glutamate 154, asparagine 169, and asparagine 227 each bind UDP-N-acetyl-alpha-D-glucosamine; these read LAAG, GT, and YGD. Position 105 (aspartate 105) interacts with Mg(2+). Residue asparagine 227 participates in Mg(2+) binding. The segment at 230-250 is linker; it reads LQLARLERVYQAEQAEKLLLA. The segment at 251-456 is N-acetyltransferase; that stretch reads GVMLRDPARF…QGWQRPVKKK (206 aa). UDP-N-acetyl-alpha-D-glucosamine contacts are provided by arginine 333 and lysine 351. The active-site Proton acceptor is histidine 363. Positions 366 and 377 each coordinate UDP-N-acetyl-alpha-D-glucosamine. Residues alanine 380, 386-387, serine 405, alanine 423, and arginine 440 each bind acetyl-CoA; that span reads NY.

This sequence in the N-terminal section; belongs to the N-acetylglucosamine-1-phosphate uridyltransferase family. It in the C-terminal section; belongs to the transferase hexapeptide repeat family. In terms of assembly, homotrimer. Mg(2+) serves as cofactor.

It is found in the cytoplasm. It catalyses the reaction alpha-D-glucosamine 1-phosphate + acetyl-CoA = N-acetyl-alpha-D-glucosamine 1-phosphate + CoA + H(+). The enzyme catalyses N-acetyl-alpha-D-glucosamine 1-phosphate + UTP + H(+) = UDP-N-acetyl-alpha-D-glucosamine + diphosphate. The protein operates within nucleotide-sugar biosynthesis; UDP-N-acetyl-alpha-D-glucosamine biosynthesis; N-acetyl-alpha-D-glucosamine 1-phosphate from alpha-D-glucosamine 6-phosphate (route II): step 2/2. It functions in the pathway nucleotide-sugar biosynthesis; UDP-N-acetyl-alpha-D-glucosamine biosynthesis; UDP-N-acetyl-alpha-D-glucosamine from N-acetyl-alpha-D-glucosamine 1-phosphate: step 1/1. Its pathway is bacterial outer membrane biogenesis; LPS lipid A biosynthesis. In terms of biological role, catalyzes the last two sequential reactions in the de novo biosynthetic pathway for UDP-N-acetylglucosamine (UDP-GlcNAc). The C-terminal domain catalyzes the transfer of acetyl group from acetyl coenzyme A to glucosamine-1-phosphate (GlcN-1-P) to produce N-acetylglucosamine-1-phosphate (GlcNAc-1-P), which is converted into UDP-GlcNAc by the transfer of uridine 5-monophosphate (from uridine 5-triphosphate), a reaction catalyzed by the N-terminal domain. The sequence is that of Bifunctional protein GlmU from Klebsiella pneumoniae subsp. pneumoniae (strain ATCC 700721 / MGH 78578).